Reading from the N-terminus, the 82-residue chain is M-theraphotoxin-Gr1a (82 aa).

The first 21 residues, 1-21 (MKTSVVFVIAGLALLSVVCYA), serve as a signal peptide directing secretion. Residues 22 to 46 (SELKEQSSVNEVLSTIFHFEQPEER) constitute a propeptide that is removed on maturation. Disulfide bonds link Cys-48/Cys-63, Cys-55/Cys-69, and Cys-62/Cys-76. The residue at position 80 (Phe-80) is a Phenylalanine amide.

This sequence belongs to the neurotoxin 10 (Hwtx-1) family. 52 (MTx4) subfamily. Expressed by the venom gland.

It localises to the secreted. Its function is as follows. This cationic hydrophobic peptide acts on a lot of different channels and has an antimicrobial activity. It blocks mechanosensitive ion channels (also named stretch-activated channels or SACs), without having effect on whole-cell voltage-sensitive currents. It also affects acetylcholine receptors (nAChRs) through interactions with membrane lipids by prolonging the closing time without affecting channel conductance or opening activity. It shows high affinity for lipid bilayers. It acts by partitioning into the membrane and perturbing the interface between the channel and the lipid bilayer without necessarily being in physical contact with the channel. It inhibits atrial fibrillation as well as the membrane motor of outer hair cells at low doses. It also binds to the voltage sensor of voltage-gated potassium channels from the archaebacterium Aeropyrum pernix (KvAP) without affecting channel gating. It also shows a low inhibition on a large spectra of sodium channels (Nav1.1/SCN1A, Nav1.2/SCN2A, Nav1.3/SCN3A, Nav1.4/SCN4A, Nav1.5/SCN5A, Nav1.6/SCN8A, Nav1.7/SCN9A) (IC(50)=7.4-14 uM), and potassium channels Kv11.1/KCNH2 and Kv11.2/KCNH6 (IC(50)=11 uM for both). It exhibits antimicrobial activities against the Gram-positive bacteria B.subtilis (MIC=0.5 uM), S.aureus (MIC=2-4 uM), and S.epidermidis (MIC=4-8 uM), and Gram-negative bacteria S.typhimurium (MIC=32.64 uM), P.aeruginosa (MIC=8-16 uM), and E.coli (MIC=8-16 uM). This chain is M-theraphotoxin-Gr1a, found in Grammostola rosea (Chilean rose tarantula).